Here is a 1044-residue protein sequence, read N- to C-terminus: Ras GTPase-activating protein 1 (1044 aa).

Met-1 carries the post-translational modification N-acetylmethionine. The hydrophobic stretch occupies residues 1–160; the sequence is MMAAEAGGEE…DEGDSLDGPE (160 aa). In terms of domain architecture, SH2 1 spans 178 to 269; that stretch reads WYHGKLDRTI…LKGEKLLYPV (92 aa). An SH3 domain is found at 276 to 338; it reads EDRRRVRAIL…VEDLVEEVGR (63 aa). The 91-residue stretch at 348–438 folds into the SH2 2 domain; it reads WFHGKISKQE…VEGYYLKEPV (91 aa). One can recognise a PH domain in the interval 471–574; it reads NIVKKGYLLK…WMKGLQAFCN (104 aa). Residues 574-687 form the C2 domain; the sequence is NLRKSSPGTS…QKGHATDEWF (114 aa). Phosphotyrosine is present on Tyr-612. 2 consecutive repeats follow at residues 646 to 664 and 665 to 683; these read PDIN…KSKD and PDIL…GHAT. The 211-residue stretch at 761–971 folds into the Ras-GAP domain; the sequence is KLESLLLCTL…HRMIMFLDEL (211 aa). Ser-828 carries the phosphoserine modification.

As to quaternary structure, interacts with SQSTM1. Interacts with SPSB1; the interaction does not promote degradation. Interacts with CAV2 (tyrosine phosphorylated form). Directly interacts with NCK1. Interacts with PDGFRB (tyrosine phosphorylated). Interacts (via SH2 domain) with the 'Tyr-9' phosphorylated form of PDPK1. Interacts with tyrosine-phosphorylated EPHB4. In terms of processing, phosphorylated by SRC and LCK. The phosphorylation SRC inhibits its ability to stimulate the Ras-GTPase activity, whereas phosphorylation by LCK does not display any effect on stimulation activity.

The protein localises to the cytoplasm. Functionally, inhibitory regulator of the Ras-cyclic AMP pathway. Stimulates the GTPase of normal but not oncogenic Ras p21. In Bos taurus (Bovine), this protein is Ras GTPase-activating protein 1 (RASA1).